A 245-amino-acid polypeptide reads, in one-letter code: tRNA1(Val) (adenine(37)-N6)-methyltransferase (245 aa).

This sequence belongs to the methyltransferase superfamily. tRNA (adenine-N(6)-)-methyltransferase family.

It is found in the cytoplasm. The enzyme catalyses adenosine(37) in tRNA1(Val) + S-adenosyl-L-methionine = N(6)-methyladenosine(37) in tRNA1(Val) + S-adenosyl-L-homocysteine + H(+). In terms of biological role, specifically methylates the adenine in position 37 of tRNA(1)(Val) (anticodon cmo5UAC). This Escherichia coli (strain SE11) protein is tRNA1(Val) (adenine(37)-N6)-methyltransferase.